Consider the following 74-residue polypeptide: ATP synthase subunit c (74 aa).

Transmembrane regions (helical) follow at residues 5-25 (LAYI…LGVG) and 49-69 (LFIG…VALL).

This sequence belongs to the ATPase C chain family. As to quaternary structure, F-type ATPases have 2 components, F(1) - the catalytic core - and F(0) - the membrane proton channel. F(1) has five subunits: alpha(3), beta(3), gamma(1), delta(1), epsilon(1). F(0) has three main subunits: a(1), b(2) and c(10-14). The alpha and beta chains form an alternating ring which encloses part of the gamma chain. F(1) is attached to F(0) by a central stalk formed by the gamma and epsilon chains, while a peripheral stalk is formed by the delta and b chains.

The protein resides in the cell inner membrane. In terms of biological role, f(1)F(0) ATP synthase produces ATP from ADP in the presence of a proton or sodium gradient. F-type ATPases consist of two structural domains, F(1) containing the extramembraneous catalytic core and F(0) containing the membrane proton channel, linked together by a central stalk and a peripheral stalk. During catalysis, ATP synthesis in the catalytic domain of F(1) is coupled via a rotary mechanism of the central stalk subunits to proton translocation. Key component of the F(0) channel; it plays a direct role in translocation across the membrane. A homomeric c-ring of between 10-14 subunits forms the central stalk rotor element with the F(1) delta and epsilon subunits. This is ATP synthase subunit c from Ruegeria sp. (strain TM1040) (Silicibacter sp.).